The following is a 1631-amino-acid chain: ALK tyrosine kinase receptor (1631 aa).

Positions 1–18 (MGSVGLLGLLLLRLSVTA) are cleaved as a signal peptide. Over 19 to 1053 (SGSGAGTGSG…PHLPLSLVLS (1035 aa)) the chain is Extracellular. The interval 20–53 (GSGAGTGSGTGSGTGTGTGQLVGSPATGPALQPR) is disordered. The span at 21–39 (SGAGTGSGTGSGTGTGTGQ) shows a compositional bias: gly residues. A heparin-binding region region spans residues 60 to 82 (RLQRKSLAVDFVVPSLFRVYARD). 10 N-linked (GlcNAc...) asparagine glycosylation sites follow: N185, N260, N301, N340, N427, N440, N461, N579, N587, and N643. The 164-residue stretch at 280 to 443 (LECSFDFPCE…DFFALKNCSE (164 aa)) folds into the MAM 1 domain. The MAM 2 domain maps to 494–652 (FYCNFENGFC…NISISLDCYL (159 aa)). Residues C703 and C716 are joined by a disulfide bond. N-linked (GlcNAc...) asparagine glycosylation is present at N724. C798 and C809 are oxidised to a cystine. Residues N823, N878, N879, and N901 are each glycosylated (N-linked (GlcNAc...) asparagine). A disulfide bond links C921 and C943. N1001 carries N-linked (GlcNAc...) asparagine glycosylation. Intrachain disulfides connect C1002/C1010, C1005/C1021, and C1023/C1036. Residues 1002-1040 (CSHCEGDECHMDPESHKVICFCDHGTVLAEDGVSCIVSP) form an EGF-like region. Residues 1054 to 1074 (VVTSALVAALVLAFSGIMIVY) form a helical membrane-spanning segment. The Cytoplasmic segment spans residues 1075–1631 (RRKHQELQAM…DALLKTPPGP (557 aa)). In terms of domain architecture, Protein kinase spans 1131–1407 (ITLIRGLGHG…IEYCTQDPDV (277 aa)). ATP contacts are provided by residues 1137-1145 (LGHGAFGEV) and K1165. The active-site Proton acceptor is D1264. 3 disordered regions span residues 1423-1493 (EEKV…GHVN), 1526-1554 (WFTEKPTKKNNPPATKGHHDRGNLGREGS), and 1609-1631 (FEGTTAPGSSQYEDALLKTPPGP).

In terms of assembly, homodimer; homodimerizes following heparin- and ligand-binding. Interacts with CBL, IRS1, PIK3R1 and PLCG1. Interacts with FRS2 and SHC1. Interacts with PTN and MDK. Phosphorylated at tyrosine residues by autocatalysis, which activates kinase activity. In cells not stimulated by a ligand, receptor protein tyrosine phosphatase beta and zeta complex (PTPRB/PTPRZ1) dephosphorylates ALK at the sites in ALK that are undergoing autophosphorylation through autoactivation.

The protein localises to the cell membrane. The catalysed reaction is L-tyrosyl-[protein] + ATP = O-phospho-L-tyrosyl-[protein] + ADP + H(+). Activated upon ALKAL2 ligand-binding. ALKAL2-driven activation is coupled with heparin-binding. Following ligand-binding, homodimerizes and autophosphorylates, activating its kinase activity. Inactivated through dephosphorylation by receptor protein tyrosine phosphatase beta and zeta complex (PTPRB/PTPRZ1) when there is no stimulation by a ligand. Its function is as follows. Neuronal receptor tyrosine kinase that is essentially and transiently expressed in specific regions of the central and peripheral nervous systems and plays an important role in the genesis and differentiation of the nervous system. Also acts as a key thinness protein involved in the resistance to weight gain: in hypothalamic neurons, controls energy expenditure acting as a negative regulator of white adipose tissue lipolysis and sympathetic tone to fine-tune energy homeostasis. Following activation by ALKAL2 ligand at the cell surface, transduces an extracellular signal into an intracellular response. In contrast, ALKAL1 is not a potent physiological ligand for ALK. Ligand-binding to the extracellular domain induces tyrosine kinase activation, leading to activation of the mitogen-activated protein kinase (MAPK) pathway. Phosphorylates almost exclusively at the first tyrosine of the Y-x-x-x-Y-Y motif. Induces tyrosine phosphorylation of CBL, FRS2, IRS1 and SHC1, as well as of the MAP kinases MAPK1/ERK2 and MAPK3/ERK1. ALK activation may also be regulated by pleiotrophin (PTN) and midkine (MDK). PTN-binding induces MAPK pathway activation, which is important for the anti-apoptotic signaling of PTN and regulation of cell proliferation. MDK-binding induces phosphorylation of the ALK target insulin receptor substrate (IRS1), activates mitogen-activated protein kinases (MAPKs) and PI3-kinase, resulting also in cell proliferation induction. Drives NF-kappa-B activation, probably through IRS1 and the activation of the AKT serine/threonine kinase. Recruitment of IRS1 to activated ALK and the activation of NF-kappa-B are essential for the autocrine growth and survival signaling of MDK. The polypeptide is ALK tyrosine kinase receptor (Canis lupus familiaris (Dog)).